The chain runs to 684 residues: Threonine--tRNA ligase (684 aa).

In terms of domain architecture, TGS spans 1–66; the sequence is MTVPATDSCP…DTDAEVVPVA (66 aa). Residues 261–567 form a catalytic region; the sequence is DHRKLGSELD…LTEHYAGAFP (307 aa). Residues C366, H417, and H544 each contribute to the Zn(2+) site.

It belongs to the class-II aminoacyl-tRNA synthetase family. As to quaternary structure, homodimer. It depends on Zn(2+) as a cofactor.

It is found in the cytoplasm. The enzyme catalyses tRNA(Thr) + L-threonine + ATP = L-threonyl-tRNA(Thr) + AMP + diphosphate + H(+). In terms of biological role, catalyzes the attachment of threonine to tRNA(Thr) in a two-step reaction: L-threonine is first activated by ATP to form Thr-AMP and then transferred to the acceptor end of tRNA(Thr). Also edits incorrectly charged L-seryl-tRNA(Thr). In Mycolicibacterium paratuberculosis (strain ATCC BAA-968 / K-10) (Mycobacterium paratuberculosis), this protein is Threonine--tRNA ligase.